The chain runs to 106 residues: MIISTTHSIEGRQITAYLDIVSAESVQGVNVIRDMFAGMRDFFGGRSQTLERALKEARVQATDEIKERARALQADAVVGVDFEISMPAGKGGMVVVFATGTAVKLR.

This sequence belongs to the UPF0145 family.

The polypeptide is UPF0145 protein Pfl01_1745 (Pseudomonas fluorescens (strain Pf0-1)).